An 835-amino-acid polypeptide reads, in one-letter code: Bifunctional uridylyltransferase/uridylyl-removing enzyme (835 aa).

The tract at residues 1-316 is uridylyltransferase; the sequence is MTDEAEDSGP…GGKPVAERSP (316 aa). Residues 317–650 are uridylyl-removing; it reads LAEGVVEQDG…SADGPEPLGV (334 aa). One can recognise an HD domain in the interval 431–554; the sequence is VDRHLIETAV…DALATGPAAW (124 aa). The interval 610-645 is disordered; that stretch reads QTEPPADSAPAPSSPSSPSFPSPLSSPSSPSSADGP. The segment covering 621–630 has biased composition (pro residues); sequence PSSPSSPSFP. Low complexity predominate over residues 631 to 642; sequence SPLSSPSSPSSA. ACT domains lie at 651–736 and 765–835; these read ELLI…LAER and VIEV…SLRT.

It belongs to the GlnD family. Mg(2+) serves as cofactor.

It catalyses the reaction [protein-PII]-L-tyrosine + UTP = [protein-PII]-uridylyl-L-tyrosine + diphosphate. The enzyme catalyses [protein-PII]-uridylyl-L-tyrosine + H2O = [protein-PII]-L-tyrosine + UMP + H(+). With respect to regulation, uridylyltransferase (UTase) activity is inhibited by glutamine, while glutamine activates uridylyl-removing (UR) activity. Modifies, by uridylylation and deuridylylation, the PII regulatory proteins (GlnB and homologs), in response to the nitrogen status of the cell that GlnD senses through the glutamine level. Under low glutamine levels, catalyzes the conversion of the PII proteins and UTP to PII-UMP and PPi, while under higher glutamine levels, GlnD hydrolyzes PII-UMP to PII and UMP (deuridylylation). Thus, controls uridylylation state and activity of the PII proteins, and plays an important role in the regulation of nitrogen assimilation and metabolism. The chain is Bifunctional uridylyltransferase/uridylyl-removing enzyme from Streptomyces coelicolor (strain ATCC BAA-471 / A3(2) / M145).